Reading from the N-terminus, the 331-residue chain is DNA-directed RNA polymerase subunit alpha (331 aa).

The segment at 1 to 225 is alpha N-terminal domain (alpha-NTD); it reads MLDIAMPKLE…QYSSIIADFN (225 aa). The alpha C-terminal domain (alpha-CTD) stretch occupies residues 243–331; sequence PSEIYDMPIE…AARLNDGSAE (89 aa).

It belongs to the RNA polymerase alpha chain family. As to quaternary structure, homodimer. The RNAP catalytic core consists of 2 alpha, 1 beta, 1 beta' and 1 omega subunit. When a sigma factor is associated with the core the holoenzyme is formed, which can initiate transcription.

The catalysed reaction is RNA(n) + a ribonucleoside 5'-triphosphate = RNA(n+1) + diphosphate. Its function is as follows. DNA-dependent RNA polymerase catalyzes the transcription of DNA into RNA using the four ribonucleoside triphosphates as substrates. The chain is DNA-directed RNA polymerase subunit alpha from Herpetosiphon aurantiacus (strain ATCC 23779 / DSM 785 / 114-95).